A 272-amino-acid chain; its full sequence is NADPH-dependent 7-cyano-7-deazaguanine reductase (272 aa).

82–84 (IES) serves as a coordination point for substrate. 84-85 (SK) is a binding site for NADPH. The active-site Thioimide intermediate is the cysteine 178. Aspartate 185 acts as the Proton donor in catalysis. 217-218 (HE) contacts substrate. 246–247 (RG) contacts NADPH.

It belongs to the GTP cyclohydrolase I family. QueF type 2 subfamily. Homodimer.

The protein resides in the cytoplasm. The enzyme catalyses 7-aminomethyl-7-carbaguanine + 2 NADP(+) = 7-cyano-7-deazaguanine + 2 NADPH + 3 H(+). Its pathway is tRNA modification; tRNA-queuosine biosynthesis. Catalyzes the NADPH-dependent reduction of 7-cyano-7-deazaguanine (preQ0) to 7-aminomethyl-7-deazaguanine (preQ1). The sequence is that of NADPH-dependent 7-cyano-7-deazaguanine reductase from Stenotrophomonas maltophilia (strain R551-3).